A 192-amino-acid polypeptide reads, in one-letter code: Elongation factor P (192 aa).

The residue at position 37 (lysine 37) is an N6-(3,6-diaminohexanoyl)-5-hydroxylysine.

This sequence belongs to the elongation factor P family. In terms of processing, may be beta-lysylated on the epsilon-amino group of Lys-37 by the combined action of EpmA and EpmB, and then hydroxylated on the C5 position of the same residue by EpmC (if this protein is present). Lysylation is critical for the stimulatory effect of EF-P on peptide-bond formation. The lysylation moiety may extend toward the peptidyltransferase center and stabilize the terminal 3-CCA end of the tRNA. Hydroxylation of the C5 position on Lys-37 may allow additional potential stabilizing hydrogen-bond interactions with the P-tRNA.

Its subcellular location is the cytoplasm. Its pathway is protein biosynthesis; polypeptide chain elongation. Its function is as follows. Involved in peptide bond synthesis. Alleviates ribosome stalling that occurs when 3 or more consecutive Pro residues or the sequence PPG is present in a protein, possibly by augmenting the peptidyl transferase activity of the ribosome. Modification of Lys-37 is required for alleviation. The chain is Elongation factor P from Acinetobacter baylyi (strain ATCC 33305 / BD413 / ADP1).